A 212-amino-acid polypeptide reads, in one-letter code: Methylthioribulose-1-phosphate dehydratase (212 aa).

Zn(2+) is bound by residues H97 and H99.

This sequence belongs to the aldolase class II family. MtnB subfamily. In terms of assembly, homotetramer. The cofactor is Zn(2+).

It catalyses the reaction 5-(methylsulfanyl)-D-ribulose 1-phosphate = 5-methylsulfanyl-2,3-dioxopentyl phosphate + H2O. The protein operates within amino-acid biosynthesis; L-methionine biosynthesis via salvage pathway; L-methionine from S-methyl-5-thio-alpha-D-ribose 1-phosphate: step 2/6. Functionally, catalyzes the dehydration of methylthioribulose-1-phosphate (MTRu-1-P) into 2,3-diketo-5-methylthiopentyl-1-phosphate (DK-MTP-1-P). This is Methylthioribulose-1-phosphate dehydratase from Bacillus mycoides (strain KBAB4) (Bacillus weihenstephanensis).